We begin with the raw amino-acid sequence, 297 residues long: Tyrosine recombinase XerD (297 aa).

A Core-binding (CB) domain is found at 1 to 86; it reads MNDLIDDFLH…SLRSFFHYLM (86 aa). One can recognise a Tyr recombinase domain in the interval 107–291; it reads SLPKVLNLDD…TKLRLKDVYK (185 aa). Active-site residues include Arg147, Lys171, His243, Arg246, and His269. Tyr278 (O-(3'-phospho-DNA)-tyrosine intermediate) is an active-site residue.

This sequence belongs to the 'phage' integrase family. XerD subfamily. As to quaternary structure, forms a cyclic heterotetrameric complex composed of two molecules of XerC and two molecules of XerD.

Its subcellular location is the cytoplasm. Its function is as follows. Site-specific tyrosine recombinase, which acts by catalyzing the cutting and rejoining of the recombining DNA molecules. The XerC-XerD complex is essential to convert dimers of the bacterial chromosome into monomers to permit their segregation at cell division. It also contributes to the segregational stability of plasmids. This Listeria innocua serovar 6a (strain ATCC BAA-680 / CLIP 11262) protein is Tyrosine recombinase XerD.